A 249-amino-acid chain; its full sequence is 4-hydroxy-tetrahydrodipicolinate reductase (249 aa).

NAD(+)-binding positions include 8 to 13, 87 to 89, and 111 to 114; these read GVTGQM, GTT, and ATNF. H143 serves as the catalytic Proton donor/acceptor. Position 144 (H144) interacts with (S)-2,3,4,5-tetrahydrodipicolinate. The Proton donor role is filled by K147. 153–154 is a (S)-2,3,4,5-tetrahydrodipicolinate binding site; that stretch reads GT.

The protein belongs to the DapB family.

Its subcellular location is the cytoplasm. The enzyme catalyses (S)-2,3,4,5-tetrahydrodipicolinate + NAD(+) + H2O = (2S,4S)-4-hydroxy-2,3,4,5-tetrahydrodipicolinate + NADH + H(+). It catalyses the reaction (S)-2,3,4,5-tetrahydrodipicolinate + NADP(+) + H2O = (2S,4S)-4-hydroxy-2,3,4,5-tetrahydrodipicolinate + NADPH + H(+). It functions in the pathway amino-acid biosynthesis; L-lysine biosynthesis via DAP pathway; (S)-tetrahydrodipicolinate from L-aspartate: step 4/4. Functionally, catalyzes the conversion of 4-hydroxy-tetrahydrodipicolinate (HTPA) to tetrahydrodipicolinate. The sequence is that of 4-hydroxy-tetrahydrodipicolinate reductase from Haloarcula marismortui (strain ATCC 43049 / DSM 3752 / JCM 8966 / VKM B-1809) (Halobacterium marismortui).